Reading from the N-terminus, the 127-residue chain is Large ribosomal subunit protein bL20 (127 aa).

The protein belongs to the bacterial ribosomal protein bL20 family.

Functionally, binds directly to 23S ribosomal RNA and is necessary for the in vitro assembly process of the 50S ribosomal subunit. It is not involved in the protein synthesizing functions of that subunit. The chain is Large ribosomal subunit protein bL20 from Corynebacterium aurimucosum (strain ATCC 700975 / DSM 44827 / CIP 107346 / CN-1) (Corynebacterium nigricans).